The following is a 584-amino-acid chain: DNA mismatch repair protein MutL (584 aa).

The protein belongs to the DNA mismatch repair MutL/HexB family.

This protein is involved in the repair of mismatches in DNA. It is required for dam-dependent methyl-directed DNA mismatch repair. May act as a 'molecular matchmaker', a protein that promotes the formation of a stable complex between two or more DNA-binding proteins in an ATP-dependent manner without itself being part of a final effector complex. This Buchnera aphidicola subsp. Acyrthosiphon pisum (strain Tuc7) protein is DNA mismatch repair protein MutL.